The chain runs to 250 residues: Sperm-egg fusion protein Juno (250 aa).

Residues 1–19 (MACWWPLLLELWTVMPTWA) form the signal peptide. Intrachain disulfides connect cysteine 27-cysteine 55, cysteine 47-cysteine 95, cysteine 56-cysteine 99, cysteine 79-cysteine 172, cysteine 86-cysteine 143, cysteine 132-cysteine 206, cysteine 136-cysteine 186, and cysteine 149-cysteine 166. Residues 62 to 81 (WEAHLDVSPLYNFSLFHCGL) form an important for interaction with IZUMO1 region. The N-linked (GlcNAc...) asparagine glycan is linked to asparagine 73. Serine 228 carries GPI-anchor amidated serine lipidation. A propeptide spanning residues 229–250 (SAPSWELSYTIMVCSLFLPFLS) is cleaved from the precursor.

Belongs to the folate receptor family. In terms of assembly, monomer. Interacts with IZUMO1; the interaction is direct. IZUMO1 and IZUMO1R/JUNO form a complex with 1:1 stoichiometry. Interacts with FCRL3/MAIA; FCRL3/MAIA replaces IZUMO1R/JUNO as IZUMO1 receptor after sperm-egg adhesion, thereby permitting species-specific gamete fusion. Interacts with WDR54. Post-translationally, the protein is rapidly cleaved following fertilization, being only weakly detectable in zona-intact fertilized eggs at telophase II and undetectable at the pronuclear stage. Sheding is probably required to block to polyspermy and ensuring egg fusion with a single sperm. Expressed in unfertilized oocytes (at protein level).

It localises to the cell membrane. It is found in the cell projection. Its subcellular location is the microvillus membrane. In terms of biological role, receptor for IZUMO1 present at the cell surface of oocytes (oolemma), which is essential for species-specific gamete recognition and fertilization. The IZUMO1:IZUMO1R/JUNO interaction is a necessary adhesion event between sperm and egg that is required for fertilization but is not sufficient for cell fusion. The ligand-receptor interaction probably does not act as a membrane 'fusogen'. Does not bind folate. This chain is Sperm-egg fusion protein Juno, found in Homo sapiens (Human).